We begin with the raw amino-acid sequence, 391 residues long: Pepsin B (391 aa).

Positions 1-16 (MKCLILALICLQLSEG) are cleaved as a signal peptide. The propeptide at 17-60 (LVVRQILHKGKSIRERMEENGVLEDFLRYNKKADPAAKFLFNKD) is activation peptide. A Peptidase A1 domain is found at 75 to 388 (YFGEISIGTP…DMANNRVGFA (314 aa)). Asp-93 is a catalytic residue. 2 disulfide bridges follow: Cys-106/Cys-111 and Cys-270/Cys-274. Residue Asp-279 is part of the active site. Cys-313 and Cys-346 are oxidised to a cystine.

It belongs to the peptidase A1 family.

Its subcellular location is the secreted. The catalysed reaction is Degradation of gelatin, little activity on hemoglobin. Specificity on B chain of insulin more restricted than that of pepsin A. Does not cleave 1-Phe-|-Val-2, 4-Gln-|-His-5 or 23-Gly-|-Phe-24.. Its function is as follows. Hydrolyzes various peptides including beta-endorphin, insulin B chain, dynorphin A, and neurokinin A, with high specificity for the cleavage of the Phe-Xaa bonds. The sequence is that of Pepsin B from Monodelphis domestica (Gray short-tailed opossum).